The primary structure comprises 31 residues: Cyclotide mech-4 (31 aa).

Positions 1–31 (GSIPCGESCVYIPCISSLLGCSCKSKVCYKD) form a cross-link, cyclopeptide (Gly-Asp). 3 disulfides stabilise this stretch: cysteine 5/cysteine 21, cysteine 9/cysteine 23, and cysteine 14/cysteine 28.

This is a cyclic peptide. Post-translationally, contains 3 disulfide bonds.

Probably participates in a plant defense mechanism (Potential). Binds to and induces leakage in phospholipd membranes, particularly ones containing 1-palmitoyl-2-oleophosphatidylethanolamine (POPE). In Melicytus chathamicus (Chatham Island mahoe), this protein is Cyclotide mech-4.